The following is a 294-amino-acid chain: tRNA-cytidine(32) 2-sulfurtransferase (294 aa).

Positions 70 to 75 (SGGKDS) match the PP-loop motif motif. The [4Fe-4S] cluster site is built by Cys145, Cys148, and Cys236.

The protein belongs to the TtcA family. Homodimer. Requires Mg(2+) as cofactor. It depends on [4Fe-4S] cluster as a cofactor.

It localises to the cytoplasm. The enzyme catalyses cytidine(32) in tRNA + S-sulfanyl-L-cysteinyl-[cysteine desulfurase] + AH2 + ATP = 2-thiocytidine(32) in tRNA + L-cysteinyl-[cysteine desulfurase] + A + AMP + diphosphate + H(+). The protein operates within tRNA modification. Catalyzes the ATP-dependent 2-thiolation of cytidine in position 32 of tRNA, to form 2-thiocytidine (s(2)C32). The sulfur atoms are provided by the cysteine/cysteine desulfurase (IscS) system. This chain is tRNA-cytidine(32) 2-sulfurtransferase, found in Rhizobium meliloti (strain 1021) (Ensifer meliloti).